The primary structure comprises 1481 residues: Cystic fibrosis transmembrane conductance regulator (1481 aa).

The Cytoplasmic portion of the chain corresponds to 1–77 (MQRSPLEKAS…KLINALRRCF (77 aa)). The chain crosses the membrane as a helical span at residues 78-98 (FWRFTFYGILLYLGEVTKAVQ). The 285-residue stretch at 81 to 365 (FTFYGILLYL…WAVQTWYDSL (285 aa)) folds into the ABC transmembrane type-1 1 domain. Over 99–122 (PLLLGRIIASYDPDNKTERSIAIY) the chain is Extracellular. A helical transmembrane segment spans residues 123–146 (LGIGLCLLFIVRTLLLHPAIFGLH). The Cytoplasmic portion of the chain corresponds to 147 to 195 (HIGMQMRIAMFSLIYKKTLKLSSRVLDKISIGQLVSLLSNNLNKFDEGL). A helical transmembrane segment spans residues 196–216 (ALAHFVWIAPLQVALLMGLIW). Topologically, residues 217–222 (ELLQAS) are extracellular. A helical membrane pass occupies residues 223–243 (AFCGLGFLIVLALFQAGLGRM). Topologically, residues 244–298 (MMKYRDQRAGKINERLVITSEMIENIQSVKAYCWEEAMEKIIENLRQTELKLTRK) are cytoplasmic. The helical transmembrane segment at 299–319 (AAYVRYFNSSAFFFSGFFVVF) threads the bilayer. Over 320–339 (LSVLPYALIKGIVLRKIFTT) the chain is Extracellular. Residues 340-358 (ISFCIVLRMAVTRQFPWAV) form a helical membrane-spanning segment. At 359-858 (QTWYDSLGAI…YLRYITLHKS (500 aa)) the chain is on the cytoplasmic side. ATP-binding positions include Trp401, Ser434, 458 to 465 (GSTGAGKT), and Gln493. The region spanning 423–646 (NGDDNLFFSN…RPDFSSKLMG (224 aa)) is the ABC transporter 1 domain. Cys524 carries S-palmitoyl cysteine lipidation. A phosphoserine mark is found at Ser549 and Ser660. Residues 654–831 (SSERRNSILT…EEINEEDLKE (178 aa)) are disordered R region. Ser670 bears the Phosphoserine; by PKA mark. Ser686 bears the Phosphoserine mark. Residue Lys688 forms a Glycyl lysine isopeptide (Lys-Gly) (interchain with G-Cter in ubiquitin) linkage. Residues Ser700 and Ser712 each carry the phosphoserine modification. Residue Thr717 is modified to Phosphothreonine. Phosphoserine occurs at positions 737, 753, 768, 790, 795, and 813. Residues 859–879 (LIFVLIWCLVIFLAEVAASLV) form a helical membrane-spanning segment. Residues 859–1155 (LIFVLIWCLV…AVNSSIDVDS (297 aa)) enclose the ABC transmembrane type-1 2 domain. Residues 880 to 918 (VLWLLGNTPFQDKGNSTYSRNNSYAVIITNTSSYYVFYI) lie on the Extracellular side of the membrane. Asn894, Asn900, and Asn909 each carry an N-linked (GlcNAc...) asparagine glycan. The discontinuously helical transmembrane segment at 919–939 (YVGVADTLLALGFFRGLPLVH) threads the bilayer. Residues 940–990 (TLITVSKMLHHKMLHSVLQAPMSTLNTLKAGGILNRFSKDIAILDDLLPLT) are Cytoplasmic-facing. Residues 991–1011 (IFDFIQLLLIVIGAIAVVSVL) form a helical membrane-spanning segment. The Extracellular segment spans residues 1012–1013 (QP). A helical transmembrane segment spans residues 1014 to 1034 (YIFLATVPVIAAFILLRAYFL). Over 1035–1095 (QTSQQLKQLE…TANWFLYLST (61 aa)) the chain is Cytoplasmic. Residues 1096–1116 (LRWFQMRIEMIFVIFFIAVTF) form a helical membrane-spanning segment. The Extracellular segment spans residues 1117-1130 (ISILTTGEGEGTVG). The helical transmembrane segment at 1131–1151 (IILTLAMNIMSTLQWAVNSSI) threads the bilayer. Residues 1152–1481 (DVDSLMRSVS…TEEEVQETRL (330 aa)) lie on the Cytoplasmic side of the membrane. The region spanning 1211–1444 (MTIKDLTAKY…KSLFRQAISH (234 aa)) is the ABC transporter 2 domain. ATP-binding positions include Tyr1220 and 1245–1252 (GRTGSGKS). An interaction with GORASP2 region spans residues 1387–1481 (RALKQAFADC…TEEEVQETRL (95 aa)). Cys1396 is lipidated: S-palmitoyl cysteine. 2 positions are modified to phosphoserine: Ser1445 and Ser1457. The tract at residues 1453–1481 (HRNSSKYKSQPQIASLKEETEEEVQETRL) is disordered. The segment covering 1471–1481 (ETEEEVQETRL) has biased composition (acidic residues). The short motif at 1479–1481 (TRL) is the PDZ-binding element.

It belongs to the ABC transporter superfamily. ABCC family. CFTR transporter (TC 3.A.1.202) subfamily. As to quaternary structure, monomer; does not require oligomerization for channel activity. May form oligomers in the membrane. Interacts with SLC26A3, SLC26A6 and NHERF1. Interacts with SHANK2. Interacts with MYO6. Interacts (via C-terminus) with GOPC (via PDZ domain); this promotes CFTR internalization and thereby decreases channel activity. Interacts with SLC4A7 through NHERF1. Found in a complex with MYO5B and RAB11A. Interacts with ANO1. Interacts with SLC26A8. Interacts with AHCYL1; the interaction increases CFTR activity. Interacts with CSE1L. The core-glycosylated form interacts with GORASP2 (via PDZ GRASP-type 1 domain) in respone to ER stress. Interacts with MARCHF2; the interaction leads to CFTR ubiqtuitination and degradation. Interacts with ADGRG2. N-glycosylated. Post-translationally, phosphorylated; cAMP treatment promotes phosphorylation and activates the channel. Dephosphorylation decreases the ATPase activity (in vitro). Phosphorylation at PKA sites activates the channel. Phosphorylation at PKC sites enhances the response to phosphorylation by PKA. Phosphorylated by AMPK; this inhibits channel activity. In terms of processing, ubiquitinated, leading to its degradation in the lysosome. Deubiquitination by USP10 in early endosomes enhances its endocytic recycling to the cell membrane. Ubiquitinated by RNF185 during ER stress. Ubiquitinated by MARCHF2.

It is found in the apical cell membrane. Its subcellular location is the early endosome membrane. The protein localises to the cell membrane. It localises to the recycling endosome membrane. The protein resides in the endoplasmic reticulum membrane. It is found in the nucleus. It catalyses the reaction ATP + H2O + closed Cl(-) channel = ADP + phosphate + open Cl(-) channel.. The catalysed reaction is chloride(in) = chloride(out). The enzyme catalyses hydrogencarbonate(in) = hydrogencarbonate(out). It carries out the reaction ATP + H2O = ADP + phosphate + H(+). Epithelial ion channel that plays an important role in the regulation of epithelial ion and water transport and fluid homeostasis. Mediates the transport of chloride ions across the cell membrane. Possesses an intrinsic ATPase activity and utilizes ATP to gate its channel; the passive flow of anions through the channel is gated by cycles of ATP binding and hydrolysis by the ATP-binding domains. The ion channel is also permeable to HCO(3)(-); selectivity depends on the extracellular chloride concentration. Exerts its function also by modulating the activity of other ion channels and transporters. Contributes to the regulation of the pH and the ion content of the epithelial fluid layer. Modulates the activity of the epithelial sodium channel (ENaC) complex, in part by regulating the cell surface expression of the ENaC complex. May regulate bicarbonate secretion and salvage in epithelial cells by regulating the transporter SLC4A7. Can inhibit the chloride channel activity of ANO1. Plays a role in the chloride and bicarbonate homeostasis during sperm epididymal maturation and capacitation. In Aotus nancymaae (Ma's night monkey), this protein is Cystic fibrosis transmembrane conductance regulator.